Consider the following 667-residue polypeptide: Mannosyl-oligosaccharide alpha-1,2-mannosidase IA (667 aa).

Over 1 to 18 the chain is Cytoplasmic; the sequence is MYRISPIGRKSNFHSREK. Residues 19 to 39 form a helical; Signal-anchor for type II membrane protein membrane-spanning segment; it reads CLIGLVLVTLCFLCFGGIFLL. Residues 40-667 lie on the Lumenal side of the membrane; sequence PDNFGSDRVL…PVTLPVSNAS (628 aa). The interval 154-192 is disordered; sequence GDNAASQASSHPQSSAQQHNQQQPQLPLGGGGNDQAPDT. Low complexity predominate over residues 156–178; sequence NAASQASSHPQSSAQQHNQQQPQ. Asn-278 carries an N-linked (GlcNAc...) asparagine glycan. Cys-483 and Cys-515 are oxidised to a cystine. Catalysis depends on Glu-529, which acts as the Proton donor. Ca(2+) is bound at residue Thr-640.

The protein belongs to the glycosyl hydrolase 47 family. Requires Ca(2+) as cofactor. Mg(2+) serves as cofactor. As to expression, complex spatial distribution during embryogenesis, including expression in lobula plate giant neurons. Also expressed in adult wing and eyes.

The protein resides in the golgi apparatus membrane. The enzyme catalyses N(4)-(alpha-D-Man-(1-&gt;2)-alpha-D-Man-(1-&gt;2)-alpha-D-Man-(1-&gt;3)-[alpha-D-Man-(1-&gt;2)-alpha-D-Man-(1-&gt;3)-[alpha-D-Man-(1-&gt;2)-alpha-D-Man-(1-&gt;6)]-alpha-D-Man-(1-&gt;6)]-beta-D-Man-(1-&gt;4)-beta-D-GlcNAc-(1-&gt;4)-beta-D-GlcNAc)-L-asparaginyl-[protein] (N-glucan mannose isomer 9A1,2,3B1,2,3) + 4 H2O = N(4)-(alpha-D-Man-(1-&gt;3)-[alpha-D-Man-(1-&gt;3)-[alpha-D-Man-(1-&gt;6)]-alpha-D-Man-(1-&gt;6)]-beta-D-Man-(1-&gt;4)-beta-D-GlcNAc-(1-&gt;4)-beta-D-GlcNAc)-L-asparaginyl-[protein] (N-glucan mannose isomer 5A1,2) + 4 beta-D-mannose. The catalysed reaction is N(4)-(alpha-D-Man-(1-&gt;2)-alpha-D-Man-(1-&gt;2)-alpha-D-Man-(1-&gt;3)-[alpha-D-Man-(1-&gt;3)-[alpha-D-Man-(1-&gt;2)-alpha-D-Man-(1-&gt;6)]-alpha-D-Man-(1-&gt;6)]-beta-D-Man-(1-&gt;4)-beta-D-GlcNAc-(1-&gt;4)-beta-D-GlcNAc)-L-asparaginyl-[protein] (N-glucan mannose isomer 8A1,2,3B1,3) + 3 H2O = N(4)-(alpha-D-Man-(1-&gt;3)-[alpha-D-Man-(1-&gt;3)-[alpha-D-Man-(1-&gt;6)]-alpha-D-Man-(1-&gt;6)]-beta-D-Man-(1-&gt;4)-beta-D-GlcNAc-(1-&gt;4)-beta-D-GlcNAc)-L-asparaginyl-[protein] (N-glucan mannose isomer 5A1,2) + 3 beta-D-mannose. It participates in protein modification; protein glycosylation. In terms of biological role, involved in the maturation of Asn-linked oligosaccharides. Progressively trim alpha-1,2-linked mannose residues from Man(9)GlcNAc(2) to produce Man(5)GlcNAc(2). The polypeptide is Mannosyl-oligosaccharide alpha-1,2-mannosidase IA (Drosophila melanogaster (Fruit fly)).